Consider the following 179-residue polypeptide: Large ribosomal subunit protein uL6 (179 aa).

Belongs to the universal ribosomal protein uL6 family. In terms of assembly, part of the 50S ribosomal subunit.

Functionally, this protein binds to the 23S rRNA, and is important in its secondary structure. It is located near the subunit interface in the base of the L7/L12 stalk, and near the tRNA binding site of the peptidyltransferase center. The chain is Large ribosomal subunit protein uL6 from Bacillus velezensis (strain DSM 23117 / BGSC 10A6 / LMG 26770 / FZB42) (Bacillus amyloliquefaciens subsp. plantarum).